The sequence spans 361 residues: 3-dehydroquinate synthase (361 aa).

This sequence belongs to the archaeal-type DHQ synthase family.

The enzyme catalyses 2-amino-2,3,7-trideoxy-D-lyxo-hept-6-ulosonate + NAD(+) + H2O = 3-dehydroquinate + NH4(+) + NADH + H(+). Functionally, catalyzes the oxidative deamination and cyclization of 2-amino-3,7-dideoxy-D-threo-hept-6-ulosonic acid (ADH) to yield 3-dehydroquinate (DHQ), which is fed into the canonical shikimic pathway of aromatic amino acid biosynthesis. This chain is 3-dehydroquinate synthase, found in Methanococcus maripaludis (strain DSM 14266 / JCM 13030 / NBRC 101832 / S2 / LL).